We begin with the raw amino-acid sequence, 440 residues long: Ribosomal protein uS12 methylthiotransferase RimO (440 aa).

An MTTase N-terminal domain is found at 1-117 (MKIFFISLGC…ITEVIDKVLG (117 aa)). The [4Fe-4S] cluster site is built by Cys10, Cys46, Cys80, Cys154, Cys158, and Cys161. In terms of domain architecture, Radical SAM core spans 140–370 (TTGGYYSFLK…MEIQQGIAFE (231 aa)). A TRAM domain is found at 373 to 440 (ESMVGRKLKV…KEYDLIGTAE (68 aa)).

This sequence belongs to the methylthiotransferase family. RimO subfamily. Requires [4Fe-4S] cluster as cofactor.

It localises to the cytoplasm. It carries out the reaction L-aspartate(89)-[ribosomal protein uS12]-hydrogen + (sulfur carrier)-SH + AH2 + 2 S-adenosyl-L-methionine = 3-methylsulfanyl-L-aspartate(89)-[ribosomal protein uS12]-hydrogen + (sulfur carrier)-H + 5'-deoxyadenosine + L-methionine + A + S-adenosyl-L-homocysteine + 2 H(+). Functionally, catalyzes the methylthiolation of an aspartic acid residue of ribosomal protein uS12. This Lachnoclostridium phytofermentans (strain ATCC 700394 / DSM 18823 / ISDg) (Clostridium phytofermentans) protein is Ribosomal protein uS12 methylthiotransferase RimO.